The following is a 784-amino-acid chain: LPS-assembly protein LptD (784 aa).

The N-terminal stretch at 1–24 (MKKRIPTLLATMIATALYSQQGLA) is a signal peptide. 2 disulfide bridges follow: Cys31–Cys724 and Cys173–Cys725.

It belongs to the LptD family. As to quaternary structure, component of the lipopolysaccharide transport and assembly complex. Interacts with LptE and LptA. In terms of processing, contains two intramolecular disulfide bonds.

Its subcellular location is the cell outer membrane. In terms of biological role, together with LptE, is involved in the assembly of lipopolysaccharide (LPS) at the surface of the outer membrane. This chain is LPS-assembly protein LptD, found in Escherichia coli O1:K1 / APEC.